The following is a 171-amino-acid chain: MDYFTLFGLPAQYSIDLPALTIRFQDLQRQFHPDKFASGTPAEQLAAVSQSATINQAWQTLRNPLARAEYLLSLHGFDLTSEQHTVRDTAFLMEQLELREELDEIDQAKDEARLESFIKRVKGMFDSRHQQMVEQLNNETWDVAADSVRKLRFLDKLRSSAEQLEEKLLDF.

Residues 2–74 (DYFTLFGLPA…LARAEYLLSL (73 aa)) form the J domain.

The protein belongs to the HscB family. In terms of assembly, interacts with HscA and stimulates its ATPase activity. Interacts with IscU.

In terms of biological role, co-chaperone involved in the maturation of iron-sulfur cluster-containing proteins. Seems to help targeting proteins to be folded toward HscA. The polypeptide is Co-chaperone protein HscB (Enterobacter sp. (strain 638)).